The chain runs to 210 residues: 3-hexulose-6-phosphate synthase 1 (210 aa).

This sequence belongs to the HPS/KGPDC family. HPS subfamily.

The catalysed reaction is D-ribulose 5-phosphate + formaldehyde = D-arabino-hex-3-ulose 6-phosphate. It participates in one-carbon metabolism; formaldehyde assimilation via RuMP pathway; D-fructose 6-phosphate from D-ribulose 5-phosphate and formaldehyde: step 1/2. Catalyzes the condensation of ribulose 5-phosphate with formaldehyde to form 3-hexulose 6-phosphate. This chain is 3-hexulose-6-phosphate synthase 1, found in Staphylococcus saprophyticus subsp. saprophyticus (strain ATCC 15305 / DSM 20229 / NCIMB 8711 / NCTC 7292 / S-41).